Reading from the N-terminus, the 293-residue chain is Elongation factor Ts (293 aa).

Residues 80 to 83 (TDFV) are involved in Mg(2+) ion dislocation from EF-Tu.

This sequence belongs to the EF-Ts family.

It is found in the cytoplasm. Its function is as follows. Associates with the EF-Tu.GDP complex and induces the exchange of GDP to GTP. It remains bound to the aminoacyl-tRNA.EF-Tu.GTP complex up to the GTP hydrolysis stage on the ribosome. The polypeptide is Elongation factor Ts (Burkholderia vietnamiensis (strain G4 / LMG 22486) (Burkholderia cepacia (strain R1808))).